The sequence spans 77 residues: U8-lycotoxin-Ls1j (77 aa).

Positions 1–20 are cleaved as a signal peptide; sequence MKLIIFTGLILFAIVSLIEA. The propeptide occupies 21 to 26; it reads QANNEK.

This sequence belongs to the neurotoxin 19 (CSTX) family. 08 (U8-Lctx) subfamily. Contains 4 disulfide bonds. In terms of tissue distribution, expressed by the venom gland.

It localises to the secreted. This Lycosa singoriensis (Wolf spider) protein is U8-lycotoxin-Ls1j.